The chain runs to 562 residues: NAD-dependent malic enzyme (562 aa).

Catalysis depends on Tyr-101, which acts as the Proton donor. NAD(+) is bound at residue Arg-154. The Proton acceptor role is filled by Lys-172. 3 residues coordinate a divalent metal cation: Glu-243, Asp-244, and Asp-267. NAD(+) is bound by residues Asp-267 and Asn-415.

It belongs to the malic enzymes family. In terms of assembly, homotetramer. It depends on Mg(2+) as a cofactor. Mn(2+) serves as cofactor.

The catalysed reaction is (S)-malate + NAD(+) = pyruvate + CO2 + NADH. It catalyses the reaction oxaloacetate + H(+) = pyruvate + CO2. This chain is NAD-dependent malic enzyme, found in Aliivibrio fischeri (strain MJ11) (Vibrio fischeri).